A 99-amino-acid chain; its full sequence is Malonate decarboxylase acyl carrier protein (99 aa).

Ser25 carries the post-translational modification O-(phosphoribosyl dephospho-coenzyme A)serine.

It belongs to the MdcC family. Post-translationally, covalently binds the prosthetic group of malonate decarboxylase.

Its subcellular location is the cytoplasm. Functionally, subunit of malonate decarboxylase, it is an acyl carrier protein to which acetyl and malonyl thioester residues are bound via a 2'-(5''-phosphoribosyl)-3'-dephospho-CoA prosthetic group and turn over during the catalytic mechanism. This chain is Malonate decarboxylase acyl carrier protein, found in Pseudomonas syringae pv. tomato (strain ATCC BAA-871 / DC3000).